A 154-amino-acid polypeptide reads, in one-letter code: 6,7-dimethyl-8-ribityllumazine synthase (154 aa).

5-amino-6-(D-ribitylamino)uracil contacts are provided by residues Phe23, 57–59 (AFE), and 81–83 (AVI). 86–87 (AT) provides a ligand contact to (2S)-2-hydroxy-3-oxobutyl phosphate. His89 (proton donor) is an active-site residue. 5-amino-6-(D-ribitylamino)uracil is bound at residue Phe114. Arg128 is a (2S)-2-hydroxy-3-oxobutyl phosphate binding site.

The protein belongs to the DMRL synthase family.

It catalyses the reaction (2S)-2-hydroxy-3-oxobutyl phosphate + 5-amino-6-(D-ribitylamino)uracil = 6,7-dimethyl-8-(1-D-ribityl)lumazine + phosphate + 2 H2O + H(+). It participates in cofactor biosynthesis; riboflavin biosynthesis; riboflavin from 2-hydroxy-3-oxobutyl phosphate and 5-amino-6-(D-ribitylamino)uracil: step 1/2. Catalyzes the formation of 6,7-dimethyl-8-ribityllumazine by condensation of 5-amino-6-(D-ribitylamino)uracil with 3,4-dihydroxy-2-butanone 4-phosphate. This is the penultimate step in the biosynthesis of riboflavin. This is 6,7-dimethyl-8-ribityllumazine synthase from Syntrophus aciditrophicus (strain SB).